The sequence spans 812 residues: Valine--tRNA ligase (812 aa).

The short motif at 46–56 (PTVSGQLHIGH) is the 'HIGH' region element. Residues 536–540 (KMSKS) carry the 'KMSKS' region motif. Lys539 contacts ATP.

This sequence belongs to the class-I aminoacyl-tRNA synthetase family. ValS type 2 subfamily. In terms of assembly, monomer.

It localises to the cytoplasm. The enzyme catalyses tRNA(Val) + L-valine + ATP = L-valyl-tRNA(Val) + AMP + diphosphate. Its function is as follows. Catalyzes the attachment of valine to tRNA(Val). As ValRS can inadvertently accommodate and process structurally similar amino acids such as threonine, to avoid such errors, it has a 'posttransfer' editing activity that hydrolyzes mischarged Thr-tRNA(Val) in a tRNA-dependent manner. This Rickettsia bellii (strain RML369-C) protein is Valine--tRNA ligase.